The sequence spans 760 residues: Dipeptidyl peptidase 4 (760 aa).

The Cytoplasmic segment spans residues 1 to 6 (MKTPWK). A helical; Signal-anchor for type II membrane protein transmembrane segment spans residues 7–28 (VLLGLLGVAALVTIITVPIVLL). Residues 29–760 (SKDEAAADSR…HFLQQCFSLH (732 aa)) lie on the Extracellular side of the membrane. Residues Asn-83, Asn-90, Asn-144, Asn-213, Asn-223, Asn-315, and Asn-328 are each glycosylated (N-linked (GlcNAc...) asparagine). 4 cysteine pairs are disulfide-bonded: Cys-322–Cys-333, Cys-379–Cys-388, Cys-438–Cys-441, and Cys-448–Cys-466. Asn-514 is a glycosylation site (N-linked (GlcNAc...) asparagine). Ser-624 (charge relay system) is an active-site residue. Residues Cys-643 and Cys-756 are joined by a disulfide bond. The N-linked (GlcNAc...) asparagine glycan is linked to Asn-679. Active-site charge relay system residues include Asp-702 and His-734.

It belongs to the peptidase S9B family. DPPIV subfamily. Monomer. Homodimer. Heterodimer with Seprase (FAP). Requires homodimerization for optimal dipeptidyl peptidase activity and T-cell costimulation. Found in a membrane raft complex, at least composed of BCL10, CARD11, DPP4 and IKBKB. Associates with collagen. Interacts with PTPRC; the interaction is enhanced in an interleukin-12-dependent manner in activated lymphocytes. Interacts (via extracellular domain) with ADA; does not inhibit its dipeptidyl peptidase activity. Interacts with CAV1 (via the N-terminus); the interaction is direct. Interacts (via cytoplasmic tail) with CARD11 (via PDZ domain); its homodimerization is necessary for interaction with CARD11. Interacts with IGF2R; the interaction is direct. Interacts with GPC3. Post-translationally, the soluble form (Dipeptidyl peptidase 4 soluble form also named SDPP) derives from the membrane form (Dipeptidyl peptidase 4 membrane form also named MDPP) by proteolytic processing. In terms of processing, N- and O-Glycosylated. Phosphorylated. Mannose 6-phosphate residues in the carbohydrate moiety are necessary for interaction with IGF2R in activated T-cells. Mannose 6-phosphorylation is induced during T-cell activation.

The protein localises to the secreted. The protein resides in the cell membrane. Its subcellular location is the apical cell membrane. It localises to the cell projection. It is found in the invadopodium membrane. The protein localises to the lamellipodium membrane. The protein resides in the cell junction. Its subcellular location is the membrane raft. It catalyses the reaction Release of an N-terminal dipeptide, Xaa-Yaa-|-Zaa-, from a polypeptide, preferentially when Yaa is Pro, provided Zaa is neither Pro nor hydroxyproline.. Inhibited by GPC3 and diprotin A. Cell surface glycoprotein receptor involved in the costimulatory signal essential for T-cell receptor (TCR)-mediated T-cell activation. Acts as a positive regulator of T-cell coactivation, by binding at least ADA, CAV1, IGF2R, and PTPRC. Its binding to CAV1 and CARD11 induces T-cell proliferation and NF-kappa-B activation in a T-cell receptor/CD3-dependent manner. Its interaction with ADA also regulates lymphocyte-epithelial cell adhesion. In association with FAP is involved in the pericellular proteolysis of the extracellular matrix (ECM), the migration and invasion of endothelial cells into the ECM. May be involved in the promotion of lymphatic endothelial cells adhesion, migration and tube formation. When overexpressed, enhanced cell proliferation, a process inhibited by GPC3. Also acts as a serine exopeptidase with a dipeptidyl peptidase activity that regulates various physiological processes by cleaving peptides in the circulation, including many chemokines, mitogenic growth factors, neuropeptides and peptide hormones. Removes N-terminal dipeptides sequentially from polypeptides having unsubstituted N-termini provided that the penultimate residue is proline. In Mus musculus (Mouse), this protein is Dipeptidyl peptidase 4 (Dpp4).